Here is a 63-residue protein sequence, read N- to C-terminus: Conotoxin Tx-D0111 (63 aa).

The signal sequence occupies residues Met1–Ser19. Positions Asp20 to Ser47 are excised as a propeptide.

It belongs to the conotoxin T superfamily. Post-translationally, contains 2 disulfide bonds that can be either 'C1-C3, C2-C4' or 'C1-C4, C2-C3', since these disulfide connectivities have been observed for conotoxins with cysteine framework V (for examples, see AC P0DQQ7 and AC P81755). Expressed by the venom duct.

The protein localises to the secreted. This Conus textile (Cloth-of-gold cone) protein is Conotoxin Tx-D0111.